Here is a 327-residue protein sequence, read N- to C-terminus: Auxin-responsive protein IAA18 (327 aa).

3 disordered regions span residues 26 to 45, 52 to 98, and 180 to 202; these read VKEA…DEDK, GLPG…IGTT, and NLTN…DDKA. Residues 49–53 carry the EAR-like (transcriptional repression) motif; the sequence is LKLGL. A compositionally biased stretch (basic and acidic residues) spans 58–69; sequence QEERAADSREKI. Residues 70–82 are compositionally biased toward low complexity; the sequence is QQQQRESSSEPSI. A compositionally biased stretch (polar residues) spans 180 to 189; the sequence is NLTNGSSFKQ. Over residues 190–202 the composition is skewed to basic and acidic residues; the sequence is SPERQNDEADDKA. The 105-residue stretch at 209 to 313 folds into the PB1 domain; sequence RPLVKINMDG…TVKRLRVMRR (105 aa).

It belongs to the Aux/IAA family. Homodimers and heterodimers. In terms of tissue distribution, highly expressed in flowers. Expressed in roots and etiolated seedlings.

The protein localises to the nucleus. Its function is as follows. Aux/IAA proteins are short-lived transcriptional factors that function as repressors of early auxin response genes at low auxin concentrations. In Oryza sativa subsp. japonica (Rice), this protein is Auxin-responsive protein IAA18 (IAA18).